A 609-amino-acid polypeptide reads, in one-letter code: MEWDSGSDLSADDASSLADDEEGGLFPGGGPIPYPVGNLLHTAPCGFVVTDAVEPDQPIIYVNTVFEMVTGYRAEEVLGGNCRFLQCRGPFAKRRHPLVDSMVVSEIRKCIDEGIEFQGELLNFRKDGSPLMNRLRLTPIYGDDDTITHIIGIQFFIETDIDLGPVLGSSTKEKSIDGIYSALAAGERNVSRGMCGLFQLSDEVVSMKILSRLTPRDVASVSSVCRRLYVLTKNEDLWRRVCQNAWGSETTRVLETVPGAKRLGWGRLARELTTLEAAAWRKLSVGGSVEPSRCNFSACAVGNRVVLFGGEGVNMQPMNDTFVLDLNSDYPEWQHVKVSSPPPGRWGHTLTCVNGSNLVVFGGCGQQGLLNDVFVLNLDAKPPTWREISGLAPPLPRSWHSSCTLDGTKLIVSGGCADSGVLLSDTFLLDLSIEKPVWREIPAAWTPPSRLGHTLSVYGGRKILMFGGLAKSGPLKFRSSDVFTMDLSEEEPCWRCVTGSGMPGAGNPGGVAPPPRLDHVAVNLPGGRILIFGGSVAGLHSASQLYLLDPTEDKPTWRILNIPGRPPRFAWGHGTCVVGGTRAIVLGGQTGEEWMLSELHELSLASYLT.

The segment covering 1 to 17 (MEWDSGSDLSADDASSL) has biased composition (low complexity). Residues 1-24 (MEWDSGSDLSADDASSLADDEEGG) are disordered. Positions 32–114 (IPYPVGNLLH…SEIRKCIDEG (83 aa)) constitute a PAS domain. Cys82 is subject to S-4a-FMN cysteine. The region spanning 118–161 (QGELLNFRKDGSPLMNRLRLTPIYGDDDTITHIIGIQFFIETDI) is the PAC domain. Residues 195–241 (CGLFQLSDEVVSMKILSRLTPRDVASVSSVCRRLYVLTKNEDLWRRV) form the F-box domain. Kelch repeat units lie at residues 292 to 342 (SRCN…SSPP), 345 to 392 (RWGH…SGLA), 397 to 445 (RSWH…PAAW), 450 to 501 (RLGH…TGSG), and 516 to 564 (RLDH…NIPG).

This sequence belongs to the ADAGIO family. Interacts with NFXL2. Interacts (via N-terminus) with GI and (via Kelch repeats) with ADO3. Component of an E3 ubiquitin ligase SCF(ADO1) complex composed of SKP1A/ASK1 (or SKP1B/ASK2), CUL1, RBX1 and ADO1. Also interacts with SKP1D/ASK4, SKP1K/ASK11, CRY1, PHYB, APRR1 and APRR5, and probably with SKP1N/ASK14 and SKP1S/ASK19. In terms of processing, may be ubiquitinated. Degraded in a proteasome-dependent manner. Post-translationally, FMN binds covalently to cysteine after exposure to blue light and is reversed in the dark. In terms of tissue distribution, ubiquitously expressed with higher levels in cotyledons and leaves.

Its subcellular location is the nucleus. The protein localises to the cytoplasm. The protein operates within protein modification; protein ubiquitination. Functionally, component of an E3 ubiquitin ligase complex that plays a central role in blue light-dependent circadian cycles. Acts as a blue light photoreceptor, due to the presence of FMN, that mediates light-regulated protein degradation of critical clock components by targeting them to the proteasome complex. The SCF(ADO1) E3 ubiquitin ligase complex is involved in the regulation of circadian clock-dependent processes including the transition to flowering time, hypocotyl elongation, cotyledons and leaf movement rhythms. APRR1/TOC1 and APRR5, but not 'GIGANTEA', are proteolytic substrates of this ubiquitin ligase complex. Blue light enhances cooperative stabilization of 'GIGANTEA' and ADO1/ZTL, leading to amplification and sharpening of the expression profile of APRR1/TOC1. ADO1/ZTL interacts with ADO3, preventing the interaction of ADO3 with CDF1. The sequence is that of Adagio protein 1 (ADO1) from Arabidopsis thaliana (Mouse-ear cress).